We begin with the raw amino-acid sequence, 268 residues long: MPRSFLVKKHFNASKKPNYSELDTHTVIISPYLCESYPMPVIPKPEILTSGAYSPITVWTSAVPFHSPLPSGLSPLTGYSSSLGRVSPLPSSDTSSKDHSGSESPISDEEERLQPKLSDPHAIEAEKFQCNLCNKTYSTFSGLAKHKQLHCDAQARKSFSCKYCDKEYVSLGALKMHIRTHTLPCVCKICGKAFSRPWLLQGHIRTHTGEKPFSCPHCNRAFADRSNLRAHLQTHSDVKKYQCKNCSKTFSRMSLLHKHEESGCCVAH.

The interval 1-20 (MPRSFLVKKHFNASKKPNYS) is SNAG domain. The tract at residues 84–116 (GRVSPLPSSDTSSKDHSGSESPISDEEERLQPK) is disordered. 4 consecutive C2H2-type zinc fingers follow at residues 128-150 (FQCN…KQLH), 159-181 (FSCK…IRTH), 185-207 (CVCK…IRTH), and 213-235 (FSCP…LQTH). The segment at 241-264 (YQCKNCSKTFSRMSLLHKHEESGC) adopts a C2H2-type 5; atypical zinc-finger fold.

This sequence belongs to the snail C2H2-type zinc-finger protein family. Interacts (via SNAG domain) with LIMD1 (via LIM domains), WTIP (via LIM domains) and AJUBA (via LIM domains). Interacts (via zinc fingers) with KPNA2, KPNB1 and TNPO1. May interact (via zinc fingers) with IPO7. Post-translationally, phosphorylated by GSK3B. Once phosphorylated, it becomes a target for ubiquitination. Ubiquitinated by the SCF(FBXO11) complex; ubiquitination requires previous GSK3B-mediated SNAI2 phosphorylation.

Its subcellular location is the nucleus. The protein localises to the cytoplasm. Its function is as follows. Transcriptional repressor that modulates both activator-dependent and basal transcription. Involved in the generation and migration of neural crest cells. Plays a role in mediating RAF1-induced transcriptional repression of the TJ protein, occludin (OCLN) and subsequent oncogenic transformation of epithelial cells. Represses BRCA2 expression by binding to its E2-box-containing silencer and recruiting CTBP1 and HDAC1 in breast cells. In epidermal keratinocytes, binds to the E-box in ITGA3 promoter and represses its transcription. Involved in the regulation of ITGB1 and ITGB4 expression and cell adhesion and proliferation in epidermal keratinocytes. Binds to E-box2 domain of BSG and activates its expression during TGFB1-induced epithelial-mesenchymal transition (EMT) in hepatocytes. Represses E-Cadherin/CDH1 transcription via E-box elements. Involved in osteoblast maturation. Binds to RUNX2 and SOC9 promoters and may act as a positive and negative transcription regulator, respectively, in osteoblasts. Binds to CXCL12 promoter via E-box regions in mesenchymal stem cells and osteoblasts. Plays an essential role in TWIST1-induced EMT and its ability to promote invasion and metastasis. In Rattus norvegicus (Rat), this protein is Zinc finger protein SNAI2 (Snai2).